A 608-amino-acid chain; its full sequence is Threonine--tRNA ligase (608 aa).

Residues 1–145 are editing domain; the sequence is MKTLLIHAKH…TIKPGRRVRP (145 aa). Catalytic regions lie at residues 192-489 and 193-489; these read PKYL…PSLP and KYLE…PSLP. Residues Cys-286, His-337, and His-458 each coordinate Zn(2+).

The protein belongs to the class-II aminoacyl-tRNA synthetase family. Homodimer. Requires Zn(2+) as cofactor.

It is found in the cytoplasm. The catalysed reaction is tRNA(Thr) + L-threonine + ATP = L-threonyl-tRNA(Thr) + AMP + diphosphate + H(+). Its function is as follows. Catalyzes the attachment of threonine to tRNA(Thr) in a two-step reaction: L-threonine is first activated by ATP to form Thr-AMP and then transferred to the acceptor end of tRNA(Thr). Also edits incorrectly charged L-seryl-tRNA(Thr). The chain is Threonine--tRNA ligase from Thermofilum pendens (strain DSM 2475 / Hrk 5).